The primary structure comprises 428 residues: MKTSLFKSLYFQVLTAIAIGILLGHYYPELGAQMKPLGDAFVKLIKMIIAPVIFCTVVTGIAGMESMKAVGRTGAVALLYFEIVSTIALINGLIIVNVVQPGAGMNVDPATLDAQAVAVYAAQAKEQGIIAFLMDVIPGSVIGAFASGNILQVLLFAVLFGFALHRLGSKGQLIFNVIESFSQVIFGIINMIMRLAPIGAFGAMAFTIGKYGVGSLVQLGQLIICFYITCILFVVVVLGTIARVTGFSIFKFIRYIREELLIVLGTSSSESALPRMLDKMEKLGCRKSVVGLVIPTGYSFNLDGTSIYLTMAAVFIAQATNSHMDIFHQITLLVVLLLSSKGAAGVTGSGFIVLAATISAVGHLPVAGLALILGIDRFMSEARALTNLVGNGVATVVVAKWVKELDHQKLDDVLNNRAPDGKTHEISS.

9 consecutive transmembrane segments (helical) span residues 5–27, 47–64, 77–99, 141–163, 184–206, 216–238, 289–311, 326–348, and 353–375; these read LFKSLYFQVLTAIAIGILLGHYY, MIIAPVIFCTVVTGIAGM, ALLYFEIVSTIALINGLIIVNVV, VIGAFASGNILQVLLFAVLFGFA, VIFGIINMIMRLAPIGAFGAMAF, LVQLGQLIICFYITCILFVVVVL, VVGLVIPTGYSFNLDGTSIYLTM, IFHQITLLVVLLLSSKGAAGVTG, and VLAATISAVGHLPVAGLALILGI.

This sequence belongs to the dicarboxylate/amino acid:cation symporter (DAACS) (TC 2.A.23) family.

It localises to the cell inner membrane. Functionally, responsible for the transport of dicarboxylates such as succinate, fumarate, and malate from the periplasm across the membrane. In Salmonella typhi, this protein is Aerobic C4-dicarboxylate transport protein.